A 489-amino-acid chain; its full sequence is Mitochondrial distribution and morphology protein 34 (489 aa).

The region spanning 1 to 205 is the SMP-LTD domain; it reads MSFNINWDSI…LPSVLYKFSQ (205 aa).

The protein belongs to the MDM34 family. As to quaternary structure, component of the ER-mitochondria encounter structure (ERMES) or MDM complex, composed of MMM1, MDM10, MDM12 and MDM34.

It localises to the mitochondrion outer membrane. Component of the ERMES/MDM complex, which serves as a molecular tether to connect the endoplasmic reticulum (ER) and mitochondria. Components of this complex are involved in the control of mitochondrial shape and protein biogenesis, and function in nonvesicular lipid trafficking between the ER and mitochondria. MDM34 is required for the interaction of the ER-resident membrane protein MMM1 and the outer mitochondrial membrane-resident beta-barrel protein MDM10. This chain is Mitochondrial distribution and morphology protein 34, found in Komagataella phaffii (strain GS115 / ATCC 20864) (Yeast).